Reading from the N-terminus, the 415-residue chain is Serine hydroxymethyltransferase 1 (415 aa).

(6S)-5,6,7,8-tetrahydrofolate is bound by residues L122 and 126-128; that span reads GHL. K230 carries the N6-(pyridoxal phosphate)lysine modification.

This sequence belongs to the SHMT family. Homodimer. Pyridoxal 5'-phosphate serves as cofactor.

It localises to the cytoplasm. It catalyses the reaction (6R)-5,10-methylene-5,6,7,8-tetrahydrofolate + glycine + H2O = (6S)-5,6,7,8-tetrahydrofolate + L-serine. The protein operates within one-carbon metabolism; tetrahydrofolate interconversion. It functions in the pathway amino-acid biosynthesis; glycine biosynthesis; glycine from L-serine: step 1/1. Catalyzes the reversible interconversion of serine and glycine with tetrahydrofolate (THF) serving as the one-carbon carrier. This reaction serves as the major source of one-carbon groups required for the biosynthesis of purines, thymidylate, methionine, and other important biomolecules. Also exhibits THF-independent aldolase activity toward beta-hydroxyamino acids, producing glycine and aldehydes, via a retro-aldol mechanism. This is Serine hydroxymethyltransferase 1 from Burkholderia thailandensis (strain ATCC 700388 / DSM 13276 / CCUG 48851 / CIP 106301 / E264).